We begin with the raw amino-acid sequence, 177 residues long: Nucleoside triphosphate/diphosphate phosphatase (177 aa).

The active-site Proton donor is Arg-23. 6 residues coordinate Mg(2+): Asn-87, Asp-103, Asp-105, Asp-107, Asp-120, and Glu-123.

This sequence belongs to the Ntdp family. It depends on Mg(2+) as a cofactor.

It carries out the reaction a ribonucleoside 5'-triphosphate + H2O = a ribonucleoside 5'-diphosphate + phosphate + H(+). It catalyses the reaction a ribonucleoside 5'-diphosphate + H2O = a ribonucleoside 5'-phosphate + phosphate + H(+). Functionally, has nucleoside phosphatase activity towards nucleoside triphosphates and nucleoside diphosphates. This chain is Nucleoside triphosphate/diphosphate phosphatase, found in Streptococcus pneumoniae serotype 19F (strain G54).